A 660-amino-acid polypeptide reads, in one-letter code: Probable cation-transporting P-type ATPase J (660 aa).

The next 5 helical transmembrane spans lie at 33 to 53 (WAAL…CGAP), 60 to 80 (LFLA…LQAL), 94 to 114 (AAIG…IVIF), 261 to 281 (IGMV…GETL), and 292 to 312 (MIVA…LAAI). Asp-340 serves as the catalytic 4-aspartylphosphate intermediate. Mg(2+) contacts are provided by Asp-544 and Asp-548. A helical membrane pass occupies residues 598 to 618 (IVVANLIVAVTFIAGLVVWDL).

The protein belongs to the cation transport ATPase (P-type) (TC 3.A.3) family. Type IB subfamily.

It localises to the cell membrane. It catalyses the reaction ATP + H2O = ADP + phosphate + H(+). The sequence is that of Probable cation-transporting P-type ATPase J (ctpJ) from Mycobacterium tuberculosis (strain CDC 1551 / Oshkosh).